Reading from the N-terminus, the 221-residue chain is MASSLNLGSPAPPIKVQNWLRGDPLSNFQLGKIYVVEFFSIYCGYCAPELSDLAKLHKKFIDTRVEFIGIAASEEAATADDARAQVDASITKSLPNTNIRMGFDHSGEMDEDWLKASLSFHVPKTFVVDRDGSIAFIGDLVMLQDVLPKVIDGNWRASGKQRMPKRSGLLKARLMLRRLFHDRVSAAIEIKNWKAPLSAIEEGINLNPDSIFLRRNLYWHE.

The Thioredoxin domain maps to 5–156 (LNLGSPAPPI…LPKVIDGNWR (152 aa)). A disulfide bridge links cysteine 43 with cysteine 46.

Belongs to the thioredoxin family.

The polypeptide is Protein FixW (fixW) (Rhizobium leguminosarum).